A 153-amino-acid chain; its full sequence is Superoxide dismutase [Cu-Zn] (153 aa).

Cu cation-binding residues include His-45 and His-47. Position 53 is a phosphothreonine (Thr-53). A disulfide bond links Cys-56 and Cys-145. Ser-59 bears the Phosphoserine mark. His-62 is a Cu cation binding site. Zn(2+)-binding residues include His-62, His-70, His-79, and Asp-82. Residue His-119 participates in Cu cation binding.

This sequence belongs to the Cu-Zn superoxide dismutase family. As to quaternary structure, homodimer. Requires Cu cation as cofactor. Zn(2+) serves as cofactor.

The protein localises to the cytoplasm. The catalysed reaction is 2 superoxide + 2 H(+) = H2O2 + O2. Functionally, destroys radicals which are normally produced within the cells and which are toxic to biological systems. This is Superoxide dismutase [Cu-Zn] from Drosophila melanogaster (Fruit fly).